A 182-amino-acid polypeptide reads, in one-letter code: UPF0397 protein SPP_0507 (182 aa).

5 consecutive transmembrane segments (helical) span residues 10 to 30 (VVAV…NIPT), 46 to 66 (LLSI…GHAI), 73 to 93 (YGLW…VGLF), 109 to 129 (ILIF…VLAP), and 148 to 168 (IVAG…LLLA).

Belongs to the UPF0397 family.

It localises to the cell membrane. The protein is UPF0397 protein SPP_0507 of Streptococcus pneumoniae (strain P1031).